We begin with the raw amino-acid sequence, 493 residues long: 1-aminocyclopropane-1-carboxylate synthase 1 (493 aa).

Position 279 is an N6-(pyridoxal phosphate)lysine (lysine 279).

This sequence belongs to the class-I pyridoxal-phosphate-dependent aminotransferase family. As to quaternary structure, homodimer. The cofactor is pyridoxal 5'-phosphate.

The enzyme catalyses S-adenosyl-L-methionine = 1-aminocyclopropane-1-carboxylate + S-methyl-5'-thioadenosine + H(+). It functions in the pathway alkene biosynthesis; ethylene biosynthesis via S-adenosyl-L-methionine; ethylene from S-adenosyl-L-methionine: step 1/2. In terms of biological role, catalyzes the formation of 1-aminocyclopropane-1-carboxylate, a direct precursor of ethylene in higher plants. This Cucurbita pepo (Vegetable marrow) protein is 1-aminocyclopropane-1-carboxylate synthase 1 (ACC1A).